The chain runs to 211 residues: Probable metallo-hydrolase YqgX (211 aa).

Residues His54, His56, Asp58, His59, His130, Asp149, and His190 each coordinate Zn(2+).

This sequence belongs to the metallo-beta-lactamase superfamily. Glyoxalase II family. It depends on Zn(2+) as a cofactor.

The protein is Probable metallo-hydrolase YqgX (yqgX) of Bacillus subtilis (strain 168).